Consider the following 157-residue polypeptide: Transcription elongation factor GreA (157 aa).

It belongs to the GreA/GreB family.

Necessary for efficient RNA polymerase transcription elongation past template-encoded arresting sites. The arresting sites in DNA have the property of trapping a certain fraction of elongating RNA polymerases that pass through, resulting in locked ternary complexes. Cleavage of the nascent transcript by cleavage factors such as GreA or GreB allows the resumption of elongation from the new 3'terminus. GreA releases sequences of 2 to 3 nucleotides. This chain is Transcription elongation factor GreA, found in Bartonella tribocorum (strain CIP 105476 / IBS 506).